Here is a 357-residue protein sequence, read N- to C-terminus: UDP-N-acetylglucosamine--N-acetylmuramyl-(pentapeptide) pyrophosphoryl-undecaprenol N-acetylglucosamine transferase (357 aa).

UDP-N-acetyl-alpha-D-glucosamine-binding positions include 15–17, asparagine 124, arginine 165, serine 194, and glutamine 288; that span reads TGG.

Belongs to the glycosyltransferase 28 family. MurG subfamily.

The protein resides in the cell inner membrane. The catalysed reaction is di-trans,octa-cis-undecaprenyl diphospho-N-acetyl-alpha-D-muramoyl-L-alanyl-D-glutamyl-meso-2,6-diaminopimeloyl-D-alanyl-D-alanine + UDP-N-acetyl-alpha-D-glucosamine = di-trans,octa-cis-undecaprenyl diphospho-[N-acetyl-alpha-D-glucosaminyl-(1-&gt;4)]-N-acetyl-alpha-D-muramoyl-L-alanyl-D-glutamyl-meso-2,6-diaminopimeloyl-D-alanyl-D-alanine + UDP + H(+). It functions in the pathway cell wall biogenesis; peptidoglycan biosynthesis. Functionally, cell wall formation. Catalyzes the transfer of a GlcNAc subunit on undecaprenyl-pyrophosphoryl-MurNAc-pentapeptide (lipid intermediate I) to form undecaprenyl-pyrophosphoryl-MurNAc-(pentapeptide)GlcNAc (lipid intermediate II). This is UDP-N-acetylglucosamine--N-acetylmuramyl-(pentapeptide) pyrophosphoryl-undecaprenol N-acetylglucosamine transferase from Nostoc punctiforme (strain ATCC 29133 / PCC 73102).